The primary structure comprises 637 residues: Phospholipase B (637 aa).

An N-terminal signal peptide occupies residues 1-19; the sequence is MSIITTAFALSLLATTAFA. The PLA2c domain occupies 46–572; sequence DCPSNVTWIR…DTWCWAGDDN (527 aa). 17 N-linked (GlcNAc...) asparagine glycosylation sites follow: Asn50, Asn56, Asn122, Asn231, Asn246, Asn272, Asn314, Asn343, Asn387, Asn433, Asn481, Asn501, Asn528, Asn553, Asn572, Asn594, and Asn606.

This sequence belongs to the lysophospholipase family. Post-translationally, N-glycosylated.

It localises to the secreted. The catalysed reaction is a 1-acyl-sn-glycero-3-phosphocholine + H2O = sn-glycerol 3-phosphocholine + a fatty acid + H(+). In terms of biological role, exhibits phospholipase B (PLB), lysophospholipase (LPL) and lysophospholipase/transacylase (LPTA) activities. This chain is Phospholipase B (PLB1), found in Cryptococcus neoformans var. neoformans serotype D (strain B-3501A) (Filobasidiella neoformans).